The sequence spans 42 residues: Fungal defensin eurocin (42 aa).

The beta-D-GlcNAc-(1-&gt;4)-Mur2Ac(oyl-L-Ala-gamma-D-Glu-L-Lys-D-Ala-D-Ala)-di-trans,octa-cis-undecaprenyl diphosphate site is built by phenylalanine 2, glycine 3, cysteine 4, and histidine 14. Cystine bridges form between cysteine 4/cysteine 27, cysteine 11/cysteine 38, and cysteine 15/cysteine 40. Residues 31-35 form an interaction site with membranes lipids region; the sequence is WYLGH. Residue cysteine 38 coordinates beta-D-GlcNAc-(1-&gt;4)-Mur2Ac(oyl-L-Ala-gamma-D-Glu-L-Lys-D-Ala-D-Ala)-di-trans,octa-cis-undecaprenyl diphosphate.

The protein belongs to the invertebrate defensin family.

Its subcellular location is the secreted. The protein localises to the target cell membrane. Its function is as follows. Antimicrobial peptide that acts against Gram-positive bacteria but not against Gram-negative bacteria. It selectively inhibits peptidoglycan biosynthesis through complex formation with the cell wall precursor lipid II (1:1 molar ratio) thus inhibiting cell wall synthesis. It does not disrupt cell membranes. In vivo, is effective against an intraperitoneal infection with S.pneumoniae. In vitro, it shows very low hemolytic and cytolytic activities. The protein is Fungal defensin eurocin of Aspergillus amstelodami.